We begin with the raw amino-acid sequence, 366 residues long: 8-hydroxyquercetin 8-O-methyltransferase (366 aa).

S-adenosyl-L-methionine is bound by residues Val207 to Gly210, Asp231 to Leu232, Asp251 to Met252, and Lys265. The active-site Proton acceptor is the His269.

It belongs to the class I-like SAM-binding methyltransferase superfamily. Cation-independent O-methyltransferase family. COMT subfamily. As to quaternary structure, homodimer.

It carries out the reaction 3,3',4',5,7,8-hexahydroxyflavone + S-adenosyl-L-methionine = 3,3',4',5,7-pentahydroxy-8-methoxyflavone + S-adenosyl-L-homocysteine + H(+). The catalysed reaction is 4',7,8-trihydroxyflavone + S-adenosyl-L-methionine = 4',7-dihydroxy-8-methoxyflavone + S-adenosyl-L-homocysteine + H(+). It catalyses the reaction 8-hydroxy-7-methoxyflavone + S-adenosyl-L-methionine = 7,8-dimethoxyflavone + S-adenosyl-L-homocysteine + H(+). It functions in the pathway flavonoid metabolism. In terms of biological role, flavonoid 8-O-methyltransferase involved in the biosynthesis of polymethoxylated flavonoids natural products such as pebrellin, aroma compounds which contribute to the flavor of peppermint, and exhibit pharmacological activities such as anti-allergic, anti-oxidant, antibacterial, anti-proliferative, and anti-inflammatory effects. Catalyzes S-adenosylmethionine-dependent regioselective 8-O-methylation of flavonoids; active on various hydroxylated flavonoid substrates, including 7,8,3'4'-tetrahydroxy-flavone, 7,8,4'-trihydroxy-flavone and 8-hydroxy-flavone 7-methyl ether. The sequence is that of 8-hydroxyquercetin 8-O-methyltransferase from Mentha piperita (Peppermint).